The sequence spans 683 residues: Elongation factor G 2 (683 aa).

The region spanning 4–279 (QQMRNIGIMA…AVVEYLPAPQ (276 aa)) is the tr-type G domain. Residues 13–20 (AHVDAGKT), 77–81 (DTPGH), and 131–134 (NKMD) contribute to the GTP site.

It belongs to the TRAFAC class translation factor GTPase superfamily. Classic translation factor GTPase family. EF-G/EF-2 subfamily.

The protein localises to the cytoplasm. Catalyzes the GTP-dependent ribosomal translocation step during translation elongation. During this step, the ribosome changes from the pre-translocational (PRE) to the post-translocational (POST) state as the newly formed A-site-bound peptidyl-tRNA and P-site-bound deacylated tRNA move to the P and E sites, respectively. Catalyzes the coordinated movement of the two tRNA molecules, the mRNA and conformational changes in the ribosome. The chain is Elongation factor G 2 (fusB) from Treponema pallidum (strain Nichols).